The sequence spans 159 residues: Phosphopantetheine adenylyltransferase (159 aa).

T8 is a binding site for substrate. Residues 8 to 9 and H16 each bind ATP; that span reads TF. Substrate is bound by residues K40, T72, and R86. Residues 87–89, E97, and 122–128 contribute to the ATP site; these read GLR and YSFLSSS.

It belongs to the bacterial CoaD family. As to quaternary structure, homohexamer. Mg(2+) is required as a cofactor.

It localises to the cytoplasm. It catalyses the reaction (R)-4'-phosphopantetheine + ATP + H(+) = 3'-dephospho-CoA + diphosphate. Its pathway is cofactor biosynthesis; coenzyme A biosynthesis; CoA from (R)-pantothenate: step 4/5. Reversibly transfers an adenylyl group from ATP to 4'-phosphopantetheine, yielding dephospho-CoA (dPCoA) and pyrophosphate. In Prochlorococcus marinus subsp. pastoris (strain CCMP1986 / NIES-2087 / MED4), this protein is Phosphopantetheine adenylyltransferase.